The chain runs to 226 residues: Translation initiation factor IF-3 (226 aa).

Positions 195-226 (FVPLAPLSPEDLIEEPELESESDSDAEPESDN) are disordered. Positions 205–226 (DLIEEPELESESDSDAEPESDN) are enriched in acidic residues.

Belongs to the IF-3 family. As to quaternary structure, monomer.

It localises to the cytoplasm. In terms of biological role, IF-3 binds to the 30S ribosomal subunit and shifts the equilibrium between 70S ribosomes and their 50S and 30S subunits in favor of the free subunits, thus enhancing the availability of 30S subunits on which protein synthesis initiation begins. The polypeptide is Translation initiation factor IF-3 (Chlorobium chlorochromatii (strain CaD3)).